A 1854-amino-acid chain; its full sequence is Protein virilizer (1854 aa).

Ser-186 bears the Phosphoserine mark. Basic and acidic residues-rich tracts occupy residues 202–214 (YHQHAEEQEQREM) and 236–259 (THSESNDREYIRCSRDKGSRDWSR). 5 disordered regions span residues 202–361 (YHQH…EIIG), 777–821 (NPEE…GKPV), 1570–1589 (TSTETPPEAEGEANPSASSC), 1720–1788 (VRGR…NRGS), and 1804–1854 (IGSP…SYLR). 3 positions are modified to phosphoserine: Ser-258, Ser-260, and Ser-276. Positions 275–285 (RSRSVVDEHKW) are enriched in basic and acidic residues. The residue at position 288 (Thr-288) is a Phosphothreonine. Ser-295 is subject to Phosphoserine. Phosphothreonine is present on Thr-297. 2 positions are modified to phosphoserine: Ser-301 and Ser-312. Composition is skewed to basic and acidic residues over residues 325–343 (HSSESLHRGERDRDDEDRS) and 777–796 (NPEEKEEKAEKSDAEDKAME). Residues 779 to 808 (EEKEEKAEKSDAEDKAMEVENEAVEAGGEK) are a coiled coil. 2 stretches are compositionally biased toward low complexity: residues 1738–1748 (SRPPNTSRPPS) and 1816–1838 (SYRSASDSHFSSSDSHYSSPHYS).

Belongs to the vir family. As to quaternary structure, component of the WMM complex, a N6-methyltransferase complex composed of a catalytic subcomplex, named MAC, and of an associated subcomplex, named MACOM. The MAC subcomplex is composed of Ime4/Mettl3 and Mettl14. The MACOM subcomplex is composed of fl(2)d, Flacc/Xio, Hakai, vir, and, in some cases of nito. Part of a complex containing fl(2)d, Sxl and vir.

It localises to the nucleus. Associated component of the WMM complex, a complex that mediates N6-methyladenosine (m6A) methylation of mRNAs, a modification that plays a role in the efficiency of mRNA splicing and is required for sex determination. Required for sex determination and dosage compensation via Sxl alternative splicing: m6A methylation acts as a key regulator of Sxl pre-mRNA and promotes female-specific alternative splicing of Sxl, which determines female physiognomy. M6A methylation is also required for neuronal functions. Required for proper inclusion of regulated exons in Ubx transcripts, leading to isoforms Ia/b and IIa/b. The chain is Protein virilizer from Drosophila melanogaster (Fruit fly).